The sequence spans 246 residues: 1-(5-phosphoribosyl)-5-[(5-phosphoribosylamino)methylideneamino] imidazole-4-carboxamide isomerase (246 aa).

The Proton acceptor role is filled by Asp8. Asp131 (proton donor) is an active-site residue.

This sequence belongs to the HisA/HisF family.

Its subcellular location is the cytoplasm. The enzyme catalyses 1-(5-phospho-beta-D-ribosyl)-5-[(5-phospho-beta-D-ribosylamino)methylideneamino]imidazole-4-carboxamide = 5-[(5-phospho-1-deoxy-D-ribulos-1-ylimino)methylamino]-1-(5-phospho-beta-D-ribosyl)imidazole-4-carboxamide. It functions in the pathway amino-acid biosynthesis; L-histidine biosynthesis; L-histidine from 5-phospho-alpha-D-ribose 1-diphosphate: step 4/9. In Bordetella petrii (strain ATCC BAA-461 / DSM 12804 / CCUG 43448), this protein is 1-(5-phosphoribosyl)-5-[(5-phosphoribosylamino)methylideneamino] imidazole-4-carboxamide isomerase.